The following is a 150-amino-acid chain: Transcription antitermination protein NusB (150 aa).

Belongs to the NusB family.

Functionally, involved in transcription antitermination. Required for transcription of ribosomal RNA (rRNA) genes. Binds specifically to the boxA antiterminator sequence of the ribosomal RNA (rrn) operons. The protein is Transcription antitermination protein NusB of Streptococcus pyogenes serotype M4 (strain MGAS10750).